A 392-amino-acid chain; its full sequence is ER-bound oxygenase mpaB (392 aa).

The Lumenal segment spans residues 1–21 (MSLPLPPALSELARALPYSRT). A helical membrane pass occupies residues 22-41 (QWLPIFVGFLIGYPILIRAL). Over 42–392 (RYKRHGEMKK…WSKYHATTND (351 aa)) the chain is Cytoplasmic. The tract at residues 352–376 (DLGQKKGPQGDPGNDEGIKDLKDGE) is disordered. Residues 367–376 (EGIKDLKDGE) are compositionally biased toward basic and acidic residues.

It belongs to the mpaB oxygenase family.

The protein localises to the endoplasmic reticulum membrane. It catalyses the reaction 4-farnesyl-3,5-dihydroxy-6-methylphthalide + AH2 + 2 O2 = (4E,8E)-10-(4,6-dihydroxy-7-methyl-3-oxo-1,3-dihydro-2-benzofuran-5-yl)-4,8-dimethyldeca-4,8-dienoate + acetone + A + H2O + H(+). It participates in secondary metabolite biosynthesis; terpenoid biosynthesis. Its function is as follows. ER-bound oxygenase; part of the gene cluster that mediates the biosynthesis of mycophenolic acid (MPA), the first isolated antibiotic natural product in the world obtained from a culture of Penicillium brevicompactum in 1893. MpaB catalyzes the oxidative cleavage the C19-C20 double bond in farnesyl-DHMP (FDHMP) to yield FDHMP-3C via a mycophenolic aldehyde intermediate. The first step of the pathway is the synthesis of 5-methylorsellinic acid (5MOA) by the cytosolic polyketide synthase mpaC. 5MOA is then converted to the phthalide compound 5,7-dihydroxy-4,6-dimethylphthalide (DHMP) by the endoplasmic reticulum-bound cytochrome P450 monooxygenase mpaDE. MpaDE first catalyzes hydroxylation of 5-MOA to 4,6-dihydroxy-2-(hydroxymethyl)-3-methylbenzoic acid (DHMB). MpaDE then acts as a lactone synthase that catalyzes the ring closure to convert DHMB into DHMP. The next step is the prenylation of DHMP by the Golgi apparatus-associated prenyltransferase mpaA to yield farnesyl-DHMP (FDHMP). The ER-bound oxygenase mpaB then mediates the oxidative cleavage the C19-C20 double bond in FDHMP to yield FDHMP-3C via a mycophenolic aldehyde intermediate. The O-methyltransferase mpaG catalyzes the methylation of FDHMP-3C to yield MFDHMP-3C. After the cytosolic methylation of FDHMP-3C, MFDHMP-3C enters into peroxisomes probably via free diffusion due to its low molecular weight. Upon a peroxisomal CoA ligation reaction, catalyzed by a beta-oxidation component enzyme acyl-CoA ligase ACL891, MFDHMP-3C-CoA would then be restricted to peroxisomes for the following beta-oxidation pathway steps. The peroxisomal beta-oxidation machinery than converts MFDHMP-3C-CoA into MPA_CoA, via a beta-oxidation chain-shortening process. Finally mpaH acts as a peroxisomal acyl-CoA hydrolase with high substrate specificity toward MPA-CoA to release the final product MPA. This chain is ER-bound oxygenase mpaB, found in Penicillium brevicompactum.